The sequence spans 291 residues: MKKIDSWLTKHGLKNRLTLVVIVIFIIFLILLFMFVNLSDEDTGQITITENAELRTGPNAAYPVIYKIEKGESFKKIDRKGKWIEVQNHAGTEKGWVAGWHTNLNIPADQSLSSNPLKGKTIVLDPGHGGSDQGASSSTPSKSLEKNYTLKTAKELKKLLNKEGAHVKMTRSNDKYVSLDDRNIKGDAFISIHNDALDSSNANGVTVYWFKDKQETLAQTLNSAIQKKALLTNRGSRQQNYQVLRQTDIPAVLLELGYISNPTDESMINDQLHRQVVEQAIVDGLKQYFSS.

The N-terminal stretch at 1-40 (MKKIDSWLTKHGLKNRLTLVVIVIFIIFLILLFMFVNLSD) is a signal peptide. The region spanning 41–105 (EDTGQITITE…WVAGWHTNLN (65 aa)) is the SH3b domain. A MurNAc-LAA domain is found at 122 to 286 (IVLDPGHGGS…VEQAIVDGLK (165 aa)). A disordered region spans residues 123–147 (VLDPGHGGSDQGASSSTPSKSLEKN). Residues 133 to 142 (QGASSSTPSK) are compositionally biased toward polar residues.

This sequence belongs to the N-acetylmuramoyl-L-alanine amidase 3 family.

The protein resides in the secreted. Probably involved in cell-wall metabolism. This is Probable cell wall amidase LytH (lytH) from Staphylococcus epidermidis (strain ATCC 35984 / DSM 28319 / BCRC 17069 / CCUG 31568 / BM 3577 / RP62A).